The primary structure comprises 178 residues: Nicotinamide-nucleotide adenylyltransferase (178 aa).

It belongs to the archaeal NMN adenylyltransferase family.

It is found in the cytoplasm. The enzyme catalyses beta-nicotinamide D-ribonucleotide + ATP + H(+) = diphosphate + NAD(+). Its pathway is cofactor biosynthesis; NAD(+) biosynthesis; NAD(+) from nicotinamide D-ribonucleotide: step 1/1. This chain is Nicotinamide-nucleotide adenylyltransferase, found in Caldivirga maquilingensis (strain ATCC 700844 / DSM 13496 / JCM 10307 / IC-167).